We begin with the raw amino-acid sequence, 511 residues long: Bifunctional purine biosynthesis protein PurH (511 aa).

One can recognise an MGS-like domain in the interval 1–145 (MKKRALVSVS…KNHQFVSVIV (145 aa)).

This sequence belongs to the PurH family.

The enzyme catalyses (6R)-10-formyltetrahydrofolate + 5-amino-1-(5-phospho-beta-D-ribosyl)imidazole-4-carboxamide = 5-formamido-1-(5-phospho-D-ribosyl)imidazole-4-carboxamide + (6S)-5,6,7,8-tetrahydrofolate. The catalysed reaction is IMP + H2O = 5-formamido-1-(5-phospho-D-ribosyl)imidazole-4-carboxamide. It participates in purine metabolism; IMP biosynthesis via de novo pathway; 5-formamido-1-(5-phospho-D-ribosyl)imidazole-4-carboxamide from 5-amino-1-(5-phospho-D-ribosyl)imidazole-4-carboxamide (10-formyl THF route): step 1/1. The protein operates within purine metabolism; IMP biosynthesis via de novo pathway; IMP from 5-formamido-1-(5-phospho-D-ribosyl)imidazole-4-carboxamide: step 1/1. The polypeptide is Bifunctional purine biosynthesis protein PurH (Bacillus cereus (strain G9842)).